Reading from the N-terminus, the 1478-residue chain is Fanconi anemia group D2 protein homolog (1478 aa).

Positions 33 to 53 (NISVESSSGGSEENIPASQEH) are disordered. A compositionally biased stretch (low complexity) spans 35 to 45 (SVESSSGGSEE). Lys595 is covalently cross-linked (Glycyl lysine isopeptide (Lys-Gly) (interchain with G-Cter in ubiquitin)). Disordered regions lie at residues 896 to 918 (NQNQ…PEPD) and 1420 to 1478 (TPRS…SKCF). Acidic residues predominate over residues 1429–1442 (ENSDDELPADDTSV). Basic residues predominate over residues 1468-1478 (RSKSSSRSKCF).

This sequence belongs to the Fanconi anemia protein FANCD2 family. As to quaternary structure, homodimer; cannot be ubiquitinated and does not bind DNA. Part of a Fanci-Fancd2 heterodimeric complex that binds and scans dsDNA for DNA damage. Interacts with Fancl (via C-terminus). In terms of processing, monoubiquitinated by Fancl in response to ionising radiation.

The protein localises to the nucleus. Functionally, required for maintenance of chromosomal stability. Together with Fancl, and probably Fanci, involved in DNA repair of damage caused by agents that induce interstrand cross-links but not agents that cause double strand breaks. Required for S phase checkpoint activation in response to ionizing radiation induced DNA damage. The protein is Fanconi anemia group D2 protein homolog of Drosophila melanogaster (Fruit fly).